The following is a 171-amino-acid chain: S-ribosylhomocysteine lyase (171 aa).

The Fe cation site is built by His-54, His-58, and Cys-128.

Belongs to the LuxS family. Homodimer. It depends on Fe cation as a cofactor.

It carries out the reaction S-(5-deoxy-D-ribos-5-yl)-L-homocysteine = (S)-4,5-dihydroxypentane-2,3-dione + L-homocysteine. Functionally, involved in the synthesis of autoinducer 2 (AI-2) which is secreted by bacteria and is used to communicate both the cell density and the metabolic potential of the environment. The regulation of gene expression in response to changes in cell density is called quorum sensing. Catalyzes the transformation of S-ribosylhomocysteine (RHC) to homocysteine (HC) and 4,5-dihydroxy-2,3-pentadione (DPD). In Escherichia coli O81 (strain ED1a), this protein is S-ribosylhomocysteine lyase.